The primary structure comprises 217 residues: UPF0111 protein MTH_1689 (217 aa).

The protein belongs to the UPF0111 family.

In Methanothermobacter thermautotrophicus (strain ATCC 29096 / DSM 1053 / JCM 10044 / NBRC 100330 / Delta H) (Methanobacterium thermoautotrophicum), this protein is UPF0111 protein MTH_1689.